The following is a 467-amino-acid chain: Probable lipase C1672.09 (467 aa).

Residues 1 to 17 (MIQLPFIQRLKWEEYMA) lie on the Cytoplasmic side of the membrane. Residues 18-38 (LFLGFFFVIFEKLLSCLAFMI) form a helical; Signal-anchor for type II membrane protein membrane-spanning segment. Topologically, residues 39–467 (HNTLGLFYRS…NHIAPRNKPI (429 aa)) are lumenal. S66 carries the post-translational modification Phosphoserine. One can recognise an AB hydrolase-1 domain in the interval 127–421 (PVVYCHHGLL…SYEHLDMIWA (295 aa)). Catalysis depends on S222, which acts as the Nucleophile. N311 and N316 each carry an N-linked (GlcNAc...) asparagine glycan. Residues D389 and H415 each act as charge relay system in the active site. Positions 440-457 (HHPPEHEENDKENREIQK) are enriched in basic and acidic residues. The disordered stretch occupies residues 440–467 (HHPPEHEENDKENREIQKNHIAPRNKPI).

It belongs to the AB hydrolase superfamily. Lipase family.

The protein localises to the cytoplasm. Its subcellular location is the membrane. Probable lipase. This Schizosaccharomyces pombe (strain 972 / ATCC 24843) (Fission yeast) protein is Probable lipase C1672.09.